Here is a 388-residue protein sequence, read N- to C-terminus: Alanine racemase 2 (388 aa).

Lys39 acts as the Proton acceptor; specific for D-alanine in catalysis. At Lys39 the chain carries N6-(pyridoxal phosphate)lysine. Position 137 (Arg137) interacts with substrate. Residue Tyr267 is the Proton acceptor; specific for L-alanine of the active site. Met315 contributes to the substrate binding site.

The protein belongs to the alanine racemase family. It depends on pyridoxal 5'-phosphate as a cofactor.

It catalyses the reaction L-alanine = D-alanine. It functions in the pathway amino-acid biosynthesis; D-alanine biosynthesis; D-alanine from L-alanine: step 1/1. In terms of biological role, catalyzes the interconversion of L-alanine and D-alanine. May also act on other amino acids. In Caldanaerobacter subterraneus subsp. tengcongensis (strain DSM 15242 / JCM 11007 / NBRC 100824 / MB4) (Thermoanaerobacter tengcongensis), this protein is Alanine racemase 2 (alr2).